The primary structure comprises 241 residues: Homeobox protein TGIF2LX (241 aa).

2 disordered regions span residues 1 to 58 and 126 to 210; these read MEAA…GNLP and TGKD…SPEE. Positions 21–39 are enriched in polar residues; it reads AKTQSPAQDTSIMSRNNAD. The segment at residues 48 to 111 is a DNA-binding region (homeobox; TALE-type); it reads EHKKKRKGNL…INARRRILPD (64 aa). Low complexity predominate over residues 195–206; it reads VSVTSPSSPELV.

This sequence belongs to the TALE/TGIF homeobox family. In terms of tissue distribution, specifically expressed in adult testis.

The protein localises to the nucleus. Functionally, may have a transcription role in testis. The polypeptide is Homeobox protein TGIF2LX (TGIF2LX) (Homo sapiens (Human)).